An 85-amino-acid chain; its full sequence is Conotoxin Mi15a (85 aa).

The signal sequence occupies residues 1 to 23 (MEKLTVLILVATVLLTIQVLGQS). The propeptide occupies 24–49 (DRDKHLKRRPKQYATKRLSARMRGHR). Gln50 bears the Pyrrolidone carboxylic acid mark.

It belongs to the conotoxin O2 superfamily. Post-translationally, contains 4 disulfide bonds. In terms of tissue distribution, expressed by the venom duct.

The protein localises to the secreted. The protein is Conotoxin Mi15a of Conus miles (Soldier cone).